Consider the following 490-residue polypeptide: ATP synthase subunit beta (490 aa).

173-180 (GGAGVGKT) lines the ATP pocket.

This sequence belongs to the ATPase alpha/beta chains family. F-type ATPases have 2 components, CF(1) - the catalytic core - and CF(0) - the membrane proton channel. CF(1) has five subunits: alpha(3), beta(3), gamma(1), delta(1), epsilon(1). CF(0) has three main subunits: a(1), b(2) and c(9-12). The alpha and beta chains form an alternating ring which encloses part of the gamma chain. CF(1) is attached to CF(0) by a central stalk formed by the gamma and epsilon chains, while a peripheral stalk is formed by the delta and b chains.

The protein localises to the cell membrane. It carries out the reaction ATP + H2O + 4 H(+)(in) = ADP + phosphate + 5 H(+)(out). Produces ATP from ADP in the presence of a proton gradient across the membrane. The catalytic sites are hosted primarily by the beta subunits. The polypeptide is ATP synthase subunit beta (Bifidobacterium longum subsp. infantis (strain ATCC 15697 / DSM 20088 / JCM 1222 / NCTC 11817 / S12)).